Reading from the N-terminus, the 423-residue chain is Amino sugar nitrososynthase RubN8 (423 aa).

It belongs to the acyl-CoA dehydrogenase family. Requires FAD as cofactor.

It participates in antibiotic biosynthesis. Functionally, nitrososynthase involved in the biosynthesis of rubradirin, an ansamycin antibiotic. In vitro, catalyzes the double-oxidation of TDP-L-epi-vancosamine to TDP-L-epi-vancosonitrose. In vivo, probably catalyzes the formation of D-rubranitrose, the nitro sugar moiety of rubradirin. This Streptomyces rubradiris (Streptomyces achromogenes subsp. rubradiris) protein is Amino sugar nitrososynthase RubN8.